Here is a 625-residue protein sequence, read N- to C-terminus: Chaperone protein HtpG (625 aa).

The a; substrate-binding stretch occupies residues 1-341 (MERKEFKAES…SEDLSLNISR (341 aa)). The segment at 342–551 (EMLQHDRQLK…EGEVSIEMEK (210 aa)) is b. The c stretch occupies residues 552 to 625 (VLRAMPDNQN…FSNDICKVMA (74 aa)).

It belongs to the heat shock protein 90 family. In terms of assembly, homodimer.

The protein localises to the cytoplasm. Molecular chaperone. Has ATPase activity. In Halalkalibacterium halodurans (strain ATCC BAA-125 / DSM 18197 / FERM 7344 / JCM 9153 / C-125) (Bacillus halodurans), this protein is Chaperone protein HtpG.